Here is a 230-residue protein sequence, read N- to C-terminus: Ribonuclease 3 (230 aa).

The 130-residue stretch at Asn-5 to Gly-134 folds into the RNase III domain. Mg(2+) is bound at residue Glu-47. Asp-51 is an active-site residue. Residues Asn-120 and Glu-123 each contribute to the Mg(2+) site. The active site involves Glu-123. One can recognise a DRBM domain in the interval Asp-159–Lys-228.

This sequence belongs to the ribonuclease III family. Homodimer. Mg(2+) serves as cofactor.

Its subcellular location is the cytoplasm. It carries out the reaction Endonucleolytic cleavage to 5'-phosphomonoester.. Functionally, digests double-stranded RNA. Involved in the processing of primary rRNA transcript to yield the immediate precursors to the large and small rRNAs (23S and 16S). Processes some mRNAs, and tRNAs when they are encoded in the rRNA operon. Processes pre-crRNA and tracrRNA of type II CRISPR loci if present in the organism. This Wolbachia pipientis subsp. Culex pipiens (strain wPip) protein is Ribonuclease 3.